The sequence spans 279 residues: Phycobilisome rod-core linker polypeptide CpcG1 (279 aa).

The PBS-linker domain maps to T11 to F189.

It belongs to the phycobilisome linker protein family. The phycobilisome is a hemidiscoidal structure that is composed of two distinct substructures: a core complex and a number of rods radiating from the core.

The protein localises to the cellular thylakoid membrane. Rod-core linker protein required for attachment of phycocyanin to allophycocyanin in cores of phycobilisomes. Its function is as follows. Linker polypeptides determine the state of aggregation and the location of the disk-shaped phycobiliprotein units within the phycobilisome and modulate their spectroscopic properties in order to mediate a directed and optimal energy transfer. This chain is Phycobilisome rod-core linker polypeptide CpcG1 (cpcG1), found in Mastigocladus laminosus (Fischerella sp.).